Here is a 97-residue protein sequence, read N- to C-terminus: Large ribosomal subunit protein eL21 (97 aa).

Polar residues predominate over residues Met1 to Arg12. The disordered stretch occupies residues Met1–Asp35.

Belongs to the eukaryotic ribosomal protein eL21 family.

In Natronomonas pharaonis (strain ATCC 35678 / DSM 2160 / CIP 103997 / JCM 8858 / NBRC 14720 / NCIMB 2260 / Gabara) (Halobacterium pharaonis), this protein is Large ribosomal subunit protein eL21.